Reading from the N-terminus, the 273-residue chain is NH(3)-dependent NAD(+) synthetase (273 aa).

An ATP-binding site is contributed by 34–41; it reads GLSGGIDS. Position 40 (Asp40) interacts with Mg(2+). Residue Arg116 participates in deamido-NAD(+) binding. ATP is bound at residue Thr136. Glu141 provides a ligand contact to Mg(2+). Residues Lys165 and Ser187 each contribute to the ATP site.

This sequence belongs to the NAD synthetase family. Homodimer.

The enzyme catalyses deamido-NAD(+) + NH4(+) + ATP = AMP + diphosphate + NAD(+) + H(+). Its pathway is cofactor biosynthesis; NAD(+) biosynthesis; NAD(+) from deamido-NAD(+) (ammonia route): step 1/1. Functionally, catalyzes the ATP-dependent amidation of deamido-NAD to form NAD. Uses ammonia as a nitrogen source. The protein is NH(3)-dependent NAD(+) synthetase of Trichlorobacter lovleyi (strain ATCC BAA-1151 / DSM 17278 / SZ) (Geobacter lovleyi).